A 32-amino-acid chain; its full sequence is Calcitonin-2 (32 aa).

C1 and C7 are oxidised to a cystine. The residue at position 32 (P32) is a Proline amide.

This sequence belongs to the calcitonin family.

Its subcellular location is the secreted. In terms of biological role, causes a rapid but short-lived drop in the level of calcium and phosphate in blood by promoting the incorporation of those ions in the bones. The polypeptide is Calcitonin-2 (Oncorhynchus gorbuscha (Pink salmon)).